A 534-amino-acid chain; its full sequence is Peptide chain release factor 3 (534 aa).

In terms of domain architecture, tr-type G spans 9-278; that stretch reads ARRRTFAIIS…FFVEHAPPPQ (270 aa). GTP contacts are provided by residues 18 to 25, 86 to 90, and 140 to 143; these read SHPDAGKT, DTPGH, and NKLD.

This sequence belongs to the TRAFAC class translation factor GTPase superfamily. Classic translation factor GTPase family. PrfC subfamily.

Its subcellular location is the cytoplasm. Functionally, increases the formation of ribosomal termination complexes and stimulates activities of RF-1 and RF-2. It binds guanine nucleotides and has strong preference for UGA stop codons. It may interact directly with the ribosome. The stimulation of RF-1 and RF-2 is significantly reduced by GTP and GDP, but not by GMP. This chain is Peptide chain release factor 3, found in Xanthomonas campestris pv. campestris (strain 8004).